We begin with the raw amino-acid sequence, 507 residues long: ATP synthase subunit alpha, chloroplastic (507 aa).

Residue 170–177 (GDRQTGKT) participates in ATP binding.

This sequence belongs to the ATPase alpha/beta chains family. F-type ATPases have 2 components, CF(1) - the catalytic core - and CF(0) - the membrane proton channel. CF(1) has five subunits: alpha(3), beta(3), gamma(1), delta(1), epsilon(1). CF(0) has four main subunits: a, b, b' and c.

It localises to the plastid. The protein resides in the chloroplast thylakoid membrane. The catalysed reaction is ATP + H2O + 4 H(+)(in) = ADP + phosphate + 5 H(+)(out). Produces ATP from ADP in the presence of a proton gradient across the membrane. The alpha chain is a regulatory subunit. The chain is ATP synthase subunit alpha, chloroplastic from Huperzia lucidula (Shining clubmoss).